The primary structure comprises 293 residues: Autophagy-related protein 36 (293 aa).

Polar residues-rich tracts occupy residues 98-108 and 260-273; these read ISSDSNKNSPP and GETL…ASSS. 2 disordered regions span residues 98 to 121 and 250 to 273; these read ISSD…NIRS and SRSR…ASSS.

As to quaternary structure, interacts with PEX3, ATG8 and ATG11.

The protein resides in the peroxisome. In terms of biological role, required for autophagic breakdown of peroxisomes, called pexophagy, through linking peroxisomes to the autophagy apparatus. Involved in regulation of the glyoxylate cycle. The sequence is that of Autophagy-related protein 36 (ATG36) from Saccharomyces cerevisiae (strain ATCC 204508 / S288c) (Baker's yeast).